A 112-amino-acid chain; its full sequence is Nitrogenase-stabilizing/protective protein NifW (112 aa).

This sequence belongs to the NifW family. Homotrimer; associates with NifD.

May protect the nitrogenase Fe-Mo protein from oxidative damage. This Rhodopseudomonas palustris (strain BisA53) protein is Nitrogenase-stabilizing/protective protein NifW.